We begin with the raw amino-acid sequence, 440 residues long: Light-independent protochlorophyllide reductase subunit N (440 aa).

The interval 1–24 is disordered; that stretch reads MTCRPALSDSHPPEPGTPSSPSFG. [4Fe-4S] cluster-binding residues include Cys-42, Cys-67, and Cys-128.

This sequence belongs to the BchN/ChlN family. As to quaternary structure, protochlorophyllide reductase is composed of three subunits; BchL, BchN and BchB. Forms a heterotetramer of two BchB and two BchN subunits. [4Fe-4S] cluster serves as cofactor.

It catalyses the reaction chlorophyllide a + oxidized 2[4Fe-4S]-[ferredoxin] + 2 ADP + 2 phosphate = protochlorophyllide a + reduced 2[4Fe-4S]-[ferredoxin] + 2 ATP + 2 H2O. It functions in the pathway porphyrin-containing compound metabolism; bacteriochlorophyll biosynthesis (light-independent). In terms of biological role, component of the dark-operative protochlorophyllide reductase (DPOR) that uses Mg-ATP and reduced ferredoxin to reduce ring D of protochlorophyllide (Pchlide) to form chlorophyllide a (Chlide). This reaction is light-independent. The NB-protein (BchN-BchB) is the catalytic component of the complex. The polypeptide is Light-independent protochlorophyllide reductase subunit N (Rhodospirillum rubrum (strain ATCC 11170 / ATH 1.1.1 / DSM 467 / LMG 4362 / NCIMB 8255 / S1)).